Reading from the N-terminus, the 293-residue chain is Beta-porphyranase B (293 aa).

An N-terminal signal peptide occupies residues 1–21; the sequence is MKLSNQFLITITLLITSITFA. A GH16 domain is found at 38–291; that stretch reads QEWKLIENMS…WVRSWQLVDS (254 aa). Substrate is bound by residues W67, R70, E156, E161, and E256. The active-site Nucleophile is the E156. The Proton donor role is filled by E161.

This sequence belongs to the glycosyl hydrolase 16 family.

The protein resides in the periplasm. The enzyme catalyses Hydrolysis of beta-D-galactopyranose-(1-&gt;4)-alpha-L-galactopyranose-6-sulfate linkages in porphyran.. Cleaves the sulfated polysaccharide porphyran at the (1-&gt;4) linkages between beta-D-galactopyranose and alpha-L-galactopyranose-6-sulfate, forming mostly the disaccharide alpha-L-galactopyranose-6-sulfate-(1-&gt;3)-beta-D-galactose. Some longer oligosaccharides of even number of residues are also observed. Inactive on the non-sulfated agarose portion of the porphyran backbone. In contrast to PorA, tolerates the presence of 3-6-anhydro-L-galactose in subsite -2. The polypeptide is Beta-porphyranase B (porB) (Zobellia galactanivorans (strain DSM 12802 / CCUG 47099 / CIP 106680 / NCIMB 13871 / Dsij)).